Here is a 189-residue protein sequence, read N- to C-terminus: Chitin synthase 1 (189 aa).

This sequence belongs to the chitin synthase family.

It localises to the cell membrane. The catalysed reaction is [(1-&gt;4)-N-acetyl-beta-D-glucosaminyl](n) + UDP-N-acetyl-alpha-D-glucosamine = [(1-&gt;4)-N-acetyl-beta-D-glucosaminyl](n+1) + UDP + H(+). Polymerizes chitin, a structural polymer of the cell wall and septum, by transferring the sugar moiety of UDP-GlcNAc to the non-reducing end of the growing chitin polymer. In Schizophyllum commune (Split gill fungus), this protein is Chitin synthase 1 (CHS1).